The primary structure comprises 469 residues: 3-isopropylmalate dehydratase large subunit (469 aa).

[4Fe-4S] cluster contacts are provided by Cys349, Cys410, and Cys413.

It belongs to the aconitase/IPM isomerase family. LeuC type 1 subfamily. Heterodimer of LeuC and LeuD. [4Fe-4S] cluster is required as a cofactor.

The enzyme catalyses (2R,3S)-3-isopropylmalate = (2S)-2-isopropylmalate. Its pathway is amino-acid biosynthesis; L-leucine biosynthesis; L-leucine from 3-methyl-2-oxobutanoate: step 2/4. Functionally, catalyzes the isomerization between 2-isopropylmalate and 3-isopropylmalate, via the formation of 2-isopropylmaleate. The polypeptide is 3-isopropylmalate dehydratase large subunit (Neisseria meningitidis serogroup A / serotype 4A (strain DSM 15465 / Z2491)).